A 336-amino-acid polypeptide reads, in one-letter code: Glycerol-3-phosphate dehydrogenase [NAD(P)+] (336 aa).

Positions 11, 12, 32, and 106 each coordinate NADPH. 2 residues coordinate sn-glycerol 3-phosphate: K106 and G136. A140 contributes to the NADPH binding site. Residues K191, D244, S254, R255, and N256 each contribute to the sn-glycerol 3-phosphate site. K191 serves as the catalytic Proton acceptor. NADPH is bound at residue R255. NADPH-binding residues include V279 and E281.

This sequence belongs to the NAD-dependent glycerol-3-phosphate dehydrogenase family.

The protein resides in the cytoplasm. The catalysed reaction is sn-glycerol 3-phosphate + NAD(+) = dihydroxyacetone phosphate + NADH + H(+). It carries out the reaction sn-glycerol 3-phosphate + NADP(+) = dihydroxyacetone phosphate + NADPH + H(+). Its pathway is membrane lipid metabolism; glycerophospholipid metabolism. In terms of biological role, catalyzes the reduction of the glycolytic intermediate dihydroxyacetone phosphate (DHAP) to sn-glycerol 3-phosphate (G3P), the key precursor for phospholipid synthesis. In Frankia casuarinae (strain DSM 45818 / CECT 9043 / HFP020203 / CcI3), this protein is Glycerol-3-phosphate dehydrogenase [NAD(P)+].